A 429-amino-acid polypeptide reads, in one-letter code: Ribosomal RNA small subunit methyltransferase B (429 aa).

S-adenosyl-L-methionine-binding positions include 254 to 260 (CAAPGGK), Asp277, Asp303, and Asp322. Cys375 serves as the catalytic Nucleophile.

It belongs to the class I-like SAM-binding methyltransferase superfamily. RsmB/NOP family.

It localises to the cytoplasm. It catalyses the reaction cytidine(967) in 16S rRNA + S-adenosyl-L-methionine = 5-methylcytidine(967) in 16S rRNA + S-adenosyl-L-homocysteine + H(+). In terms of biological role, specifically methylates the cytosine at position 967 (m5C967) of 16S rRNA. The sequence is that of Ribosomal RNA small subunit methyltransferase B from Salmonella arizonae (strain ATCC BAA-731 / CDC346-86 / RSK2980).